Reading from the N-terminus, the 272-residue chain is 3-methyl-2-oxobutanoate hydroxymethyltransferase (272 aa).

Residues Asp-51 and Asp-90 each contribute to the Mg(2+) site. Residues 51 to 52 (DS), Asp-90, and Lys-118 each bind 3-methyl-2-oxobutanoate. Glu-120 provides a ligand contact to Mg(2+). Residue Glu-187 is the Proton acceptor of the active site.

This sequence belongs to the PanB family. Homodecamer; pentamer of dimers. Requires Mg(2+) as cofactor.

It is found in the cytoplasm. The catalysed reaction is 3-methyl-2-oxobutanoate + (6R)-5,10-methylene-5,6,7,8-tetrahydrofolate + H2O = 2-dehydropantoate + (6S)-5,6,7,8-tetrahydrofolate. It participates in cofactor biosynthesis; (R)-pantothenate biosynthesis; (R)-pantoate from 3-methyl-2-oxobutanoate: step 1/2. Catalyzes the reversible reaction in which hydroxymethyl group from 5,10-methylenetetrahydrofolate is transferred onto alpha-ketoisovalerate to form ketopantoate. In Xylella fastidiosa (strain M23), this protein is 3-methyl-2-oxobutanoate hydroxymethyltransferase.